Here is a 215-residue protein sequence, read N- to C-terminus: Myelin protein zero-like protein 2 (215 aa).

The signal sequence occupies residues 1-26 (MYGKSPALVLPLLLSLQLTALCPTEA). An Ig-like V-type domain is found at 27–141 (VEIYTSGALE…DGLVGTIRLS (115 aa)). At 27–154 (VEIYTSGALE…TVPFSEIYFL (128 aa)) the chain is on the extracellular side. Residues N39 and N118 are each glycosylated (N-linked (GlcNAc...) asparagine). A disulfide bridge links C47 with C123. The chain crosses the membrane as a helical span at residues 155–175 (AVAIGSACALMIIVVIVVVLF). Residues 176–215 (QHFRKKRWADRADKAEGTKSKEEEKLNQGNKVSVFVEDTD) lie on the Cytoplasmic side of the membrane. A compositionally biased stretch (basic and acidic residues) spans 187 to 201 (ADKAEGTKSKEEEKL). Residues 187-215 (ADKAEGTKSKEEEKLNQGNKVSVFVEDTD) are disordered.

The protein belongs to the myelin P0 protein family. Widely expressed. Expressed in the cochlea, in Deiters' cells, possibly at contact sites with the basilar membrane. Expressed in both outer and inner auditory hair cells. In the stria vascularis, detected in the basal cell layer. Not detected in thymocytes, lymphocytes, macrophage or dendritic cells.

It localises to the membrane. Functionally, mediates homophilic cell-cell adhesion. The sequence is that of Myelin protein zero-like protein 2 (Mpzl2) from Mus musculus (Mouse).